The sequence spans 423 residues: Phospholipase A1-IIalpha (423 aa).

Residues 194-217 adopt a coiled-coil conformation; that stretch reads SAQEQVQGELKRLLELYKDEEISI. The active-site Acyl-ester intermediate is serine 223. Active-site charge relay system residues include serine 223, aspartate 290, and histidine 327. The disordered stretch occupies residues 399 to 423; sequence HDDDVDADDNDDSSTSNQLQELNTD. Residues 401 to 410 are compositionally biased toward acidic residues; that stretch reads DDVDADDNDD. The segment covering 411–423 has biased composition (polar residues); that stretch reads SSTSNQLQELNTD.

The protein belongs to the AB hydrolase superfamily. Lipase family.

Its subcellular location is the cytoplasm. Functionally, acylhydrolase that catalyzes the hydrolysis of phospholipids at the sn-1 position. This is Phospholipase A1-IIalpha from Arabidopsis thaliana (Mouse-ear cress).